An 83-amino-acid polypeptide reads, in one-letter code: Small ribosomal subunit protein bS16 (83 aa).

Belongs to the bacterial ribosomal protein bS16 family.

The chain is Small ribosomal subunit protein bS16 from Stutzerimonas stutzeri (strain A1501) (Pseudomonas stutzeri).